The following is a 387-amino-acid chain: Chaperone protein DnaJ (387 aa).

One can recognise a J domain in the interval 6 to 70 (DYYEILGLSR…EKRAQYDRFG (65 aa)). The CR-type zinc finger occupies 130 to 212 (GVRKDIDVPR…CSGTGRVRNT (83 aa)). 8 residues coordinate Zn(2+): Cys143, Cys146, Cys160, Cys163, Cys186, Cys189, Cys200, and Cys203. 4 CXXCXGXG motif repeats span residues 143-150 (CSNCSGTG), 160-167 (CPTCGGTG), 186-193 (CSTCRGKG), and 200-207 (CPVCSGTG). Residues 143–162 (CSNCSGTGARPGTSPKRCPT) are disordered.

Belongs to the DnaJ family. As to quaternary structure, homodimer. It depends on Zn(2+) as a cofactor.

It is found in the cytoplasm. Its function is as follows. Participates actively in the response to hyperosmotic and heat shock by preventing the aggregation of stress-denatured proteins and by disaggregating proteins, also in an autonomous, DnaK-independent fashion. Unfolded proteins bind initially to DnaJ; upon interaction with the DnaJ-bound protein, DnaK hydrolyzes its bound ATP, resulting in the formation of a stable complex. GrpE releases ADP from DnaK; ATP binding to DnaK triggers the release of the substrate protein, thus completing the reaction cycle. Several rounds of ATP-dependent interactions between DnaJ, DnaK and GrpE are required for fully efficient folding. Also involved, together with DnaK and GrpE, in the DNA replication of plasmids through activation of initiation proteins. The chain is Chaperone protein DnaJ from Methanosarcina thermophila.